The sequence spans 416 residues: Fusaric acid cluster transcription factor FUB10 (416 aa).

The segment at residues 16–47 (CDRCRAQKLRCHRDSGHSTDACLRCLKSGIEC) is a DNA-binding region (zn(2)-C6 fungal-type). Residues 50–92 (SKARPTGRPPSRQVQPTVSVEQGDTSSSSHTTDSSPSAGGTDI) form a disordered region. The segment covering 61 to 73 (RQVQPTVSVEQGD) has biased composition (polar residues). The segment covering 74–86 (TSSSSHTTDSSPS) has biased composition (low complexity).

It localises to the nucleus. Transcription factor that regulates the expression of the gene cluster that mediates the biosynthesis of fusaric acid, a mycotoxin with low to moderate toxicity to animals and humans, but with high phytotoxic properties. This Fusarium oxysporum f. sp. lycopersici (strain 4287 / CBS 123668 / FGSC 9935 / NRRL 34936) (Fusarium vascular wilt of tomato) protein is Fusaric acid cluster transcription factor FUB10.